The primary structure comprises 234 residues: Conidial surface nicotinamide adenine dinucleotide glycohydrolase nadA (234 aa).

Residues 1 to 20 (MIFTNAILVISALLPATVLS) form the signal peptide. The interval 21–117 (LQHTEDSLFP…LDTEEQPILG (97 aa)) is thump. 2 disulfide bridges follow: Cys33/Cys80 and Cys38/Cys50. N-linked (GlcNAc...) asparagine glycosylation is found at Asn45, Asn95, and Asn118. In terms of domain architecture, TNT spans 120-212 (TLPVGMKLDR…GLIDDGYLRR (93 aa)). The active site involves Arg129. Residues Phe130, Thr136, and Arg148 each coordinate NAD(+). Gln194 is a catalytic residue. Ca(2+)-binding residues include Ser216, Asp219, Glu220, and Glu223.

It belongs to the fungal surface NADase family. As to quaternary structure, homodimer. Post-translationally, N-glycosylated.

Its subcellular location is the secreted. The enzyme catalyses NAD(+) + H2O = ADP-D-ribose + nicotinamide + H(+). It catalyses the reaction NADP(+) + H2O = ADP-D-ribose 2'-phosphate + nicotinamide + H(+). With respect to regulation, the catalytic activity is positively regulated by calcium via its binding to the calcium-binding site. Its function is as follows. Conidial surface nicotinamide adenine dinucleotide glycohydrolase that cleave NAD(+) and NADP(+) but not their reduced counterparts, NADH and NADPH. Lacks both ADP-ribosyl cyclase and base exchange activity and does not mediate synthesis of calcium messengers cADPR or NAADP. Plays a role in pathogenicity by depleting the host's NAD(+) pool. In Aspergillus fumigatus (strain ATCC MYA-4609 / CBS 101355 / FGSC A1100 / Af293) (Neosartorya fumigata), this protein is Conidial surface nicotinamide adenine dinucleotide glycohydrolase nadA.